Consider the following 356-residue polypeptide: Histidinol-phosphate aminotransferase 1 (356 aa).

Residue Lys-213 is modified to N6-(pyridoxal phosphate)lysine.

Belongs to the class-II pyridoxal-phosphate-dependent aminotransferase family. Histidinol-phosphate aminotransferase subfamily. In terms of assembly, homodimer. Pyridoxal 5'-phosphate is required as a cofactor.

The catalysed reaction is L-histidinol phosphate + 2-oxoglutarate = 3-(imidazol-4-yl)-2-oxopropyl phosphate + L-glutamate. It functions in the pathway amino-acid biosynthesis; L-histidine biosynthesis; L-histidine from 5-phospho-alpha-D-ribose 1-diphosphate: step 7/9. In Burkholderia pseudomallei (strain K96243), this protein is Histidinol-phosphate aminotransferase 1.